A 96-amino-acid chain; its full sequence is Large ribosomal subunit protein bL21 (96 aa).

Positions K73–H84 are enriched in basic residues. The interval K73–L96 is disordered. Residues R85–L96 are compositionally biased toward polar residues.

It belongs to the bacterial ribosomal protein bL21 family. Part of the 50S ribosomal subunit. Contacts protein L20.

This protein binds to 23S rRNA in the presence of protein L20. This Chlorobium luteolum (strain DSM 273 / BCRC 81028 / 2530) (Pelodictyon luteolum) protein is Large ribosomal subunit protein bL21.